The chain runs to 421 residues: UDP-N-acetylglucosamine 1-carboxyvinyltransferase 1 (421 aa).

Lysine 22–asparagine 23 is a binding site for phosphoenolpyruvate. Position 95 (arginine 95) interacts with UDP-N-acetyl-alpha-D-glucosamine. Cysteine 119 (proton donor) is an active-site residue. A 2-(S-cysteinyl)pyruvic acid O-phosphothioketal modification is found at cysteine 119. Residues arginine 124–glutamine 128, aspartate 308, and valine 330 contribute to the UDP-N-acetyl-alpha-D-glucosamine site.

Belongs to the EPSP synthase family. MurA subfamily.

The protein localises to the cytoplasm. It carries out the reaction phosphoenolpyruvate + UDP-N-acetyl-alpha-D-glucosamine = UDP-N-acetyl-3-O-(1-carboxyvinyl)-alpha-D-glucosamine + phosphate. Its pathway is cell wall biogenesis; peptidoglycan biosynthesis. Cell wall formation. Adds enolpyruvyl to UDP-N-acetylglucosamine. In Staphylococcus aureus (strain MRSA252), this protein is UDP-N-acetylglucosamine 1-carboxyvinyltransferase 1.